The primary structure comprises 397 residues: Tyrosine aminotransferase (397 aa).

Substrate-binding residues include Gly-34, Tyr-66, Trp-131, and Asn-184. At Lys-247 the chain carries N6-(pyridoxal phosphate)lysine. Arg-375 contacts substrate.

It belongs to the class-I pyridoxal-phosphate-dependent aminotransferase family. In terms of assembly, homodimer. The cofactor is pyridoxal 5'-phosphate.

The catalysed reaction is L-tyrosine + 2-oxoglutarate = 3-(4-hydroxyphenyl)pyruvate + L-glutamate. It catalyses the reaction 4-methylsulfanyl-2-oxobutanoate + L-tyrosine = 3-(4-hydroxyphenyl)pyruvate + L-methionine. The enzyme catalyses an aromatic L-alpha-amino acid + 2-oxoglutarate = an aromatic oxo-acid + L-glutamate. It carries out the reaction L-aspartate + 2-oxoglutarate = oxaloacetate + L-glutamate. Its pathway is amino-acid biosynthesis; L-methionine biosynthesis via salvage pathway; L-methionine from S-methyl-5-thio-alpha-D-ribose 1-phosphate: step 6/6. Inhibited by malate and nitrotyrosine by approximately 20% at the higher concentration. At 100 uM, canaline and carboxymethoxylamine inhibit aminotransferase activity by 35 and 70%, respectively. Addition of 1.0 mM carboxymethoxylamine lead to a complete inhibition of the aminotransferase activity. Its function is as follows. catalyzes the formation of methionine from 2-keto-4-methylthiobutyrate (KMTB) primarily using aromatic amino acids (tyrosine, phenylalanine and tryptophan) or glutamate as the amino donors. Histidine, leucine, asparagine, or arginine are also functional amino donors but to a lesser extent. Can also use alpha-ketoglutarate, oxaloacetate and pyruvate as the amino acceptors. The chain is Tyrosine aminotransferase (tyrB) from Klebsiella pneumoniae.